A 366-amino-acid chain; its full sequence is Phenylalanine--tRNA ligase alpha subunit (366 aa).

E259 serves as a coordination point for Mg(2+).

It belongs to the class-II aminoacyl-tRNA synthetase family. Phe-tRNA synthetase alpha subunit type 1 subfamily. Tetramer of two alpha and two beta subunits. Mg(2+) serves as cofactor.

It localises to the cytoplasm. It catalyses the reaction tRNA(Phe) + L-phenylalanine + ATP = L-phenylalanyl-tRNA(Phe) + AMP + diphosphate + H(+). In Erythrobacter litoralis (strain HTCC2594), this protein is Phenylalanine--tRNA ligase alpha subunit.